The primary structure comprises 188 residues: Protein YecM (188 aa).

The protein to H.influenzae HI_1582/HI_1581.

This chain is Protein YecM (yecM), found in Escherichia coli (strain K12).